The sequence spans 300 residues: N-acetylmannosamine kinase (300 aa).

ATP is bound by residues alanine 5 to lysine 12 and glycine 132 to leucine 139. Residues histidine 156, cysteine 166, cysteine 168, and cysteine 173 each contribute to the Zn(2+) site.

The protein belongs to the ROK (NagC/XylR) family. NanK subfamily. In terms of assembly, homodimer.

It catalyses the reaction an N-acyl-D-mannosamine + ATP = an N-acyl-D-mannosamine 6-phosphate + ADP + H(+). Its pathway is amino-sugar metabolism; N-acetylneuraminate degradation; D-fructose 6-phosphate from N-acetylneuraminate: step 2/5. Catalyzes the phosphorylation of N-acetylmannosamine (ManNAc) to ManNAc-6-P. In Haemophilus influenzae (strain PittEE), this protein is N-acetylmannosamine kinase.